The following is a 343-amino-acid chain: Holliday junction branch migration complex subunit RuvB (343 aa).

Residues 1–182 (MTDPIPLHTP…FGIPVRLNFY (182 aa)) form a large ATPase domain (RuvB-L) region. Residues leucine 21, arginine 22, glycine 63, lysine 66, threonine 67, threonine 68, arginine 172, tyrosine 182, and arginine 219 each contribute to the ATP site. Threonine 67 provides a ligand contact to Mg(2+). Residues 183 to 253 (TEEELEKVVT…IADAALTRLE (71 aa)) form a small ATPAse domain (RuvB-S) region. The interval 256 to 343 (GLGLDAMDRR…SQTGLFDGKS (88 aa)) is head domain (RuvB-H). DNA-binding residues include arginine 292, arginine 311, and arginine 316.

It belongs to the RuvB family. Homohexamer. Forms an RuvA(8)-RuvB(12)-Holliday junction (HJ) complex. HJ DNA is sandwiched between 2 RuvA tetramers; dsDNA enters through RuvA and exits via RuvB. An RuvB hexamer assembles on each DNA strand where it exits the tetramer. Each RuvB hexamer is contacted by two RuvA subunits (via domain III) on 2 adjacent RuvB subunits; this complex drives branch migration. In the full resolvosome a probable DNA-RuvA(4)-RuvB(12)-RuvC(2) complex forms which resolves the HJ.

Its subcellular location is the cytoplasm. The enzyme catalyses ATP + H2O = ADP + phosphate + H(+). Functionally, the RuvA-RuvB-RuvC complex processes Holliday junction (HJ) DNA during genetic recombination and DNA repair, while the RuvA-RuvB complex plays an important role in the rescue of blocked DNA replication forks via replication fork reversal (RFR). RuvA specifically binds to HJ cruciform DNA, conferring on it an open structure. The RuvB hexamer acts as an ATP-dependent pump, pulling dsDNA into and through the RuvAB complex. RuvB forms 2 homohexamers on either side of HJ DNA bound by 1 or 2 RuvA tetramers; 4 subunits per hexamer contact DNA at a time. Coordinated motions by a converter formed by DNA-disengaged RuvB subunits stimulates ATP hydrolysis and nucleotide exchange. Immobilization of the converter enables RuvB to convert the ATP-contained energy into a lever motion, pulling 2 nucleotides of DNA out of the RuvA tetramer per ATP hydrolyzed, thus driving DNA branch migration. The RuvB motors rotate together with the DNA substrate, which together with the progressing nucleotide cycle form the mechanistic basis for DNA recombination by continuous HJ branch migration. Branch migration allows RuvC to scan DNA until it finds its consensus sequence, where it cleaves and resolves cruciform DNA. This is Holliday junction branch migration complex subunit RuvB from Erythrobacter litoralis (strain HTCC2594).